The primary structure comprises 217 residues: Adapter protein MecA (217 aa).

It belongs to the MecA family. Homodimer.

Functionally, enables the recognition and targeting of unfolded and aggregated proteins to the ClpC protease or to other proteins involved in proteolysis. This is Adapter protein MecA from Listeria monocytogenes serovar 1/2a (strain ATCC BAA-679 / EGD-e).